The sequence spans 272 residues: 4-hydroxy-tetrahydrodipicolinate reductase (272 aa).

NAD(+) is bound by residues 10–15 (GAGGRM), Glu36, 100–102 (GTT), and 124–127 (SGNM). Residue His157 is the Proton donor/acceptor of the active site. His158 contributes to the (S)-2,3,4,5-tetrahydrodipicolinate binding site. Lys161 functions as the Proton donor in the catalytic mechanism. Position 167–168 (167–168 (GT)) interacts with (S)-2,3,4,5-tetrahydrodipicolinate.

The protein belongs to the DapB family.

It is found in the cytoplasm. It catalyses the reaction (S)-2,3,4,5-tetrahydrodipicolinate + NAD(+) + H2O = (2S,4S)-4-hydroxy-2,3,4,5-tetrahydrodipicolinate + NADH + H(+). The catalysed reaction is (S)-2,3,4,5-tetrahydrodipicolinate + NADP(+) + H2O = (2S,4S)-4-hydroxy-2,3,4,5-tetrahydrodipicolinate + NADPH + H(+). It functions in the pathway amino-acid biosynthesis; L-lysine biosynthesis via DAP pathway; (S)-tetrahydrodipicolinate from L-aspartate: step 4/4. Functionally, catalyzes the conversion of 4-hydroxy-tetrahydrodipicolinate (HTPA) to tetrahydrodipicolinate. This is 4-hydroxy-tetrahydrodipicolinate reductase from Bradyrhizobium sp. (strain ORS 278).